A 432-amino-acid polypeptide reads, in one-letter code: Cyclic 2,3-diphosphoglycerate synthetase (432 aa).

Belongs to the cyclic 2,3-diphosphoglycerate synthetase family.

It localises to the cytoplasm. The catalysed reaction is (2R)-2,3-bisphosphoglycerate + ATP + H(+) = cyclic (2R)-2,3-bisphosphoglycerate + ADP + phosphate. Catalyzes the formation of cyclic 2,3-diphosphoglycerate (cDPG) by formation of an intramolecular phosphoanhydride bond at the expense of ATP. The protein is Cyclic 2,3-diphosphoglycerate synthetase of Thermococcus kodakarensis (strain ATCC BAA-918 / JCM 12380 / KOD1) (Pyrococcus kodakaraensis (strain KOD1)).